The primary structure comprises 262 residues: tRNA pseudouridine synthase A (262 aa).

The active-site Nucleophile is the Asp-51. Tyr-109 contacts substrate.

This sequence belongs to the tRNA pseudouridine synthase TruA family. As to quaternary structure, homodimer.

It carries out the reaction uridine(38/39/40) in tRNA = pseudouridine(38/39/40) in tRNA. In terms of biological role, formation of pseudouridine at positions 38, 39 and 40 in the anticodon stem and loop of transfer RNAs. This chain is tRNA pseudouridine synthase A, found in Actinobacillus pleuropneumoniae serotype 5b (strain L20).